Reading from the N-terminus, the 287-residue chain is Large ribosomal subunit protein uL2 (287 aa).

The interval 221–287 (RGSVMNPCDH…SKRSRGGRDS (67 aa)) is disordered. A compositionally biased stretch (basic residues) spans 258 to 287 (KTRKRNKPSNRFVLRKRRRTSKRSRGGRDS).

This sequence belongs to the universal ribosomal protein uL2 family. As to quaternary structure, part of the 50S ribosomal subunit. Forms a bridge to the 30S subunit in the 70S ribosome.

One of the primary rRNA binding proteins. Required for association of the 30S and 50S subunits to form the 70S ribosome, for tRNA binding and peptide bond formation. It has been suggested to have peptidyltransferase activity; this is somewhat controversial. Makes several contacts with the 16S rRNA in the 70S ribosome. This chain is Large ribosomal subunit protein uL2, found in Prochlorococcus marinus (strain MIT 9303).